Consider the following 438-residue polypeptide: Methionine aminopeptidase 2 (438 aa).

Residues 1–89 (MAAQAAPAEE…LFPNKQYPKG (89 aa)) form a disordered region. The segment covering 10–20 (ELSKLSVEETK) has biased composition (basic and acidic residues). Positions 51-65 (AKKKKKRKPRKKKKA) are enriched in basic residues. Histidine 191 serves as a coordination point for substrate. A divalent metal cation contacts are provided by aspartate 211, aspartate 222, and histidine 291. Histidine 299 is a binding site for substrate. The a divalent metal cation site is built by glutamate 324 and glutamate 419.

Belongs to the peptidase M24A family. Methionine aminopeptidase eukaryotic type 2 subfamily. Co(2+) serves as cofactor. The cofactor is Zn(2+). Requires Mn(2+) as cofactor. It depends on Fe(2+) as a cofactor.

The protein localises to the cytoplasm. It carries out the reaction Release of N-terminal amino acids, preferentially methionine, from peptides and arylamides.. Its function is as follows. Cotranslationally removes the N-terminal methionine from nascent proteins. The N-terminal methionine is often cleaved when the second residue in the primary sequence is small and uncharged (Met-Ala-, Cys, Gly, Pro, Ser, Thr, or Val). The polypeptide is Methionine aminopeptidase 2 (Sordaria macrospora (strain ATCC MYA-333 / DSM 997 / K(L3346) / K-hell)).